We begin with the raw amino-acid sequence, 161 residues long: Small ribosomal subunit protein uS9 (161 aa).

The protein belongs to the universal ribosomal protein uS9 family.

The chain is Small ribosomal subunit protein uS9 from Rickettsia felis (strain ATCC VR-1525 / URRWXCal2) (Rickettsia azadi).